The primary structure comprises 180 residues: CASP-like protein 2D1 (180 aa).

The Cytoplasmic portion of the chain corresponds to Met-1 to Lys-7. Residues Val-8–Met-28 form a helical membrane-spanning segment. The Extracellular segment spans residues Ala-29–Gly-48. Residues Phe-49–Leu-69 form a helical membrane-spanning segment. Topologically, residues Ser-70–Asp-79 are cytoplasmic. Residues Trp-80 to Ala-100 form a helical membrane-spanning segment. Topologically, residues Ala-101–Lys-129 are extracellular. The chain crosses the membrane as a helical span at residues Ala-130 to Val-150. Residues Ser-151–Asn-180 lie on the Cytoplasmic side of the membrane. Residues Ser-161–Asn-180 are disordered. Residues Gln-170–Asn-180 show a composition bias toward basic and acidic residues.

It belongs to the Casparian strip membrane proteins (CASP) family. In terms of assembly, homodimer and heterodimers.

Its subcellular location is the cell membrane. This chain is CASP-like protein 2D1, found in Sorghum bicolor (Sorghum).